The primary structure comprises 603 residues: Elongation factor 4 (603 aa).

Residues 7–189 (SRIRNFSIIA…AIVQQVPPPA (183 aa)) enclose the tr-type G domain. GTP-binding positions include 19-24 (DHGKST) and 136-139 (NKID).

This sequence belongs to the TRAFAC class translation factor GTPase superfamily. Classic translation factor GTPase family. LepA subfamily.

Its subcellular location is the cell inner membrane. The catalysed reaction is GTP + H2O = GDP + phosphate + H(+). Required for accurate and efficient protein synthesis under certain stress conditions. May act as a fidelity factor of the translation reaction, by catalyzing a one-codon backward translocation of tRNAs on improperly translocated ribosomes. Back-translocation proceeds from a post-translocation (POST) complex to a pre-translocation (PRE) complex, thus giving elongation factor G a second chance to translocate the tRNAs correctly. Binds to ribosomes in a GTP-dependent manner. This Synechocystis sp. (strain ATCC 27184 / PCC 6803 / Kazusa) protein is Elongation factor 4.